The sequence spans 76 residues: Acyl carrier protein (76 aa).

The Carrier domain occupies 2 to 76 (SDIAERVKKI…QAIDYIQSHT (75 aa)). Residue S36 is modified to O-(pantetheine 4'-phosphoryl)serine.

The protein belongs to the acyl carrier protein (ACP) family. Post-translationally, 4'-phosphopantetheine is transferred from CoA to a specific serine of apo-ACP by AcpS. This modification is essential for activity because fatty acids are bound in thioester linkage to the sulfhydryl of the prosthetic group.

It localises to the cytoplasm. It participates in lipid metabolism; fatty acid biosynthesis. In terms of biological role, carrier of the growing fatty acid chain in fatty acid biosynthesis. The polypeptide is Acyl carrier protein (Methylococcus capsulatus (strain ATCC 33009 / NCIMB 11132 / Bath)).